The primary structure comprises 438 residues: Gamma-glutamyl phosphate reductase (438 aa).

It belongs to the gamma-glutamyl phosphate reductase family.

The protein localises to the cytoplasm. It carries out the reaction L-glutamate 5-semialdehyde + phosphate + NADP(+) = L-glutamyl 5-phosphate + NADPH + H(+). Its pathway is amino-acid biosynthesis; L-proline biosynthesis; L-glutamate 5-semialdehyde from L-glutamate: step 2/2. Catalyzes the NADPH-dependent reduction of L-glutamate 5-phosphate into L-glutamate 5-semialdehyde and phosphate. The product spontaneously undergoes cyclization to form 1-pyrroline-5-carboxylate. The polypeptide is Gamma-glutamyl phosphate reductase (Prochlorococcus marinus (strain NATL1A)).